The chain runs to 264 residues: Phosphoinositide-3-kinase-interacting protein 1 (264 aa).

Residues 1-21 (MLLAWVHTFLLSNMLLAEAYG) form the signal peptide. Topologically, residues 22-170 (SGGCFWDNGH…SKEKKDLGTL (149 aa)) are extracellular. Positions 24–101 (GCFWDNGHLY…EKRPCEDVSC (78 aa)) constitute a Kringle domain. 3 disulfide bridges follow: cysteine 25–cysteine 101, cysteine 46–cysteine 82, and cysteine 70–cysteine 96. The tract at residues 94–129 (RPCEDVSCPETTSQAPPPSSAMELEEKSGAPGDKEA) is disordered. Residues 117-129 (LEEKSGAPGDKEA) are compositionally biased toward basic and acidic residues. Residues 171–191 (GYVLGITMMVIILAIGAGIIV) traverse the membrane as a helical segment. Over 192-264 (GYTYKRGKDL…LTGQAGTPGA (73 aa)) the chain is Cytoplasmic.

Its subcellular location is the cell membrane. In terms of biological role, negative regulator of hepatic phosphatidylinositol 3-kinase (PI3K) activity. This is Phosphoinositide-3-kinase-interacting protein 1 (Pik3ip1) from Mus musculus (Mouse).